The sequence spans 263 residues: 3-methyl-2-oxobutanoate hydroxymethyltransferase (263 aa).

Positions 45 and 84 each coordinate Mg(2+). 3-methyl-2-oxobutanoate-binding positions include 45-46, aspartate 84, and lysine 113; that span reads DS. Glutamate 115 contacts Mg(2+). Glutamate 182 acts as the Proton acceptor in catalysis.

Belongs to the PanB family. In terms of assembly, homodecamer; pentamer of dimers. It depends on Mg(2+) as a cofactor.

The protein resides in the cytoplasm. It catalyses the reaction 3-methyl-2-oxobutanoate + (6R)-5,10-methylene-5,6,7,8-tetrahydrofolate + H2O = 2-dehydropantoate + (6S)-5,6,7,8-tetrahydrofolate. Its pathway is cofactor biosynthesis; coenzyme A biosynthesis. In terms of biological role, catalyzes the reversible reaction in which hydroxymethyl group from 5,10-methylenetetrahydrofolate is transferred onto alpha-ketoisovalerate to form ketopantoate. This Ignicoccus hospitalis (strain KIN4/I / DSM 18386 / JCM 14125) protein is 3-methyl-2-oxobutanoate hydroxymethyltransferase.